The primary structure comprises 431 residues: Keratin, type I cytoskeletal 18 (431 aa).

The interval 2 to 83 (SLRTSYSVRS…SGSTGEIMGN (82 aa)) is head. The residue at position 12 (Ser12) is a Phosphoserine. Thr13 is subject to Phosphothreonine. Phosphoserine occurs at positions 22 and 36. A coil 1A region spans residues 84-119 (EKMAMQNLNDRLASYLEKVRILEQANSKLELKIREA). Positions 84–395 (EKMAMQNLND…RLLDGGDFKL (312 aa)) constitute an IF rod domain. The segment at 120-136 (LEKRGPDVHDYSRFQPI) is linker 1. Residues 137–228 (VDELRKKIFD…KNHDNEVMEL (92 aa)) form a coil 1B region. The tract at residues 229 to 252 (RNQISQSGVQVDVDAPKGQDLSQI) is linker 12. The coil 2 stretch occupies residues 253–390 (MEEIRAKYEK…IATYRRLLDG (138 aa)). The tail stretch occupies residues 391–431 (GDFKLQDALEEQKKVKVMTVTQTLVDGKVVSSSTETKERKL).

It belongs to the intermediate filament family. Heterotetramer of two type I and two type II keratins. Keratin-18 associates with keratin-8. Post-translationally, proteolytically cleaved by caspases during epithelial cell apoptosis. As to expression, expressed in simple epithelia such as intestinal mucosa, bile duct, hepatocytes, renal tubules, endothelia, ocular lens epithelium, and in a variety of mesenchymally-derived cells such as blood vessel endothelia, pillar gill cells, optic nerve glial cells, fibroblasts, interstitial cells, chondrocytes and ovarian theca cells. Also expressed in epidermis, pharyngeal mucosa, mucosa of anterior esophagus, gill mucosa and cornea.

Functionally, when phosphorylated, plays a role in filament reorganization. This Danio rerio (Zebrafish) protein is Keratin, type I cytoskeletal 18.